A 395-amino-acid chain; its full sequence is MDRCKENCVSRPVKTTVPFGPKRVLVTEQIPSQNLGSASSGQAQRVLCPSNSQRVPSQAQKLGAGQKPAPKQLPAASVPRPVSRLNNPQKNEQPAASGNDSEKEQASLQKTEDTKKRQWTLEDFDIGRPLGKGKFGNVYLARERQSKFILALKVLFKTQLEKANVEHQLRREVEIQSHLRHPNILRLYGYFHDATRVYLILEYAPLGTVYRELQKLSKFDEQRTATYITELANALSYCHSKRVIHRDIKPENLLLGSNGELKIADFGWSVHAPSSRRTTMCGTLDYLPPEMIEGRMHDEKVDLWSLGVLCYEFLVGMPPFEAHTYQETYRRISRVEFTFPDFVTEGARDLISRLLKHNASQRLTLAEVLEHPWIKANSSKPPTGHTSKEPTSKSS.

Residues 1 to 114 form a disordered region; sequence MDRCKENCVS…QASLQKTEDT (114 aa). Polar residues-rich tracts occupy residues 29 to 60 and 84 to 99; these read QIPS…SQAQ and RLNN…ASGN. Residues serine 40 and serine 50 each carry the phosphoserine modification. Over residues 100 to 114 the composition is skewed to basic and acidic residues; sequence DSEKEQASLQKTEDT. Residues 124-374 form the Protein kinase domain; it reads FDIGRPLGKG…LAEVLEHPWI (251 aa). ATP contacts are provided by residues lysine 134, lysine 153, and 201–204; that span reads LEYA. Catalysis depends on aspartate 247, which acts as the Proton acceptor. Lysine 249 participates in a covalent cross-link: Glycyl lysine isopeptide (Lys-Gly) (interchain with G-Cter in SUMO2). Residues 251-252 and aspartate 265 contribute to the ATP site; that span reads EN. An activation segment region spans residues 271-284; it reads HAPSSRRTTMCGTL. Threonine 278 and threonine 279 each carry phosphothreonine. Serine 333 bears the Phosphoserine; by PKA and PAK mark. Residues 376–385 show a composition bias toward polar residues; sequence ANSSKPPTGH. Positions 376 to 395 are disordered; the sequence is ANSSKPPTGHTSKEPTSKSS. The segment covering 386–395 has biased composition (basic and acidic residues); sequence TSKEPTSKSS.

It belongs to the protein kinase superfamily. Ser/Thr protein kinase family. Aurora subfamily. As to quaternary structure, part of a complex composed of NEDD9, AURKA and CTTN; within the complex NEDD9 acts as a scaffold protein and is required for complex formation. Identified in a complex with AUNIP and NIN. Interacts with CPEB1, JTB, TACC1, TPX2, PPP2CA, as well as with the protein phosphatase type 1 (PP1) isoforms PPP1CA, PPP1CB and PPP1CC. Also interacts with its substrates ARHGEF2, BORA, KIF2A, PARD3, and p53/TP53. Interaction with BORA promotes phosphorylation of PLK1. Interacts with GADD45A, competing with its oligomerization. Interacts with FBXL7 and CIMAP3. Interacts (via C-terminus) with AUNIP (via C-terminus). Interacts with SIRT2. Interacts with FRY; this interaction facilitates AURKA-mediated PLK1 phosphorylation. Interacts with MYCN; interaction is phospho-independent and triggers AURKA activation; AURKA competes with FBXW7 for binding to unphosphorylated MYCN but not for binding to phosphorylated MYCN. Interacts with HNRNPU. Interacts with AAAS. Interacts with KLHL18 and CUL3. Interacts with FOXP1. Interacts with HDAC6; AURKA-mediated phosphorylation of HDAC6 promotes deacetylation of alpha-tubulin. Activated by phosphorylation at Thr-279; this brings about a change in the conformation of the activation segment. Phosphorylation at Thr-279 varies during the cell cycle and is highest during M phase. Autophosphorylated at Thr-279 upon TPX2 binding. Thr-279 can be phosphorylated by several kinases, including PAK and PKA. Protein phosphatase type 1 (PP1) binds AURKA and inhibits its activity by dephosphorylating Thr-279 during mitosis. Phosphorylation at Ser-333 decreases the kinase activity. PPP2CA controls degradation by dephosphorylating Ser-52 at the end of mitosis. Post-translationally, ubiquitinated by the anaphase-promoting complex (APC), leading to its degradation by the proteasome. Ubiquitinated by CHFR, leading to its degradation by the proteasome. Ubiquitinated by the E3 ubiquitin-protein ligase complex SCF(FBXL7) during mitosis, leading to its degradation by the proteasome. In terms of tissue distribution, detected in embryonic neurons in dorsal root ganglia and brain cortex (at protein level). Highly expressed in testis, in about one third of the seminiferous tubules. Expression is restricted to specific spermatocytes nearing completion of prophase, with levels falling off on transition to elongated spermatids. Highly expressed in the ovary, expression in the oocyte starts around the transition to large growing follicle. Abundant expression is seen in the proliferating granulosa and thecal cells of the growing follicle, and in the young corpus luteum. Very weakly expressed in spleen and intestine.

It localises to the cytoplasm. The protein localises to the cytoskeleton. The protein resides in the microtubule organizing center. Its subcellular location is the centrosome. It is found in the spindle pole. It localises to the centriole. The protein localises to the cell projection. The protein resides in the neuron projection. Its subcellular location is the cilium. It is found in the cilium basal body. It localises to the basolateral cell membrane. It catalyses the reaction L-seryl-[protein] + ATP = O-phospho-L-seryl-[protein] + ADP + H(+). The catalysed reaction is L-threonyl-[protein] + ATP = O-phospho-L-threonyl-[protein] + ADP + H(+). Activation of CDK1, appears to be an upstream event of AURKA activation. Phosphatase inhibitor-2 (PPP1R2) and TPX2 act also as activators. Inactivated by the G2 checkpoint. Inhibited by GADD45A and p53/TP53, and through dephosphorylation by protein phosphatase type 1 (PP1). MLN8054 is also a potent and selective inhibitor. Activated during the early phase of cilia disassembly in the presence of CIMAP3. Inhibited by the small molecule inhibitor VX-680. Functionally, mitotic serine/threonine kinase that contributes to the regulation of cell cycle progression. Associates with the centrosome and the spindle microtubules during mitosis and plays a critical role in various mitotic events including the establishment of mitotic spindle, centrosome duplication, centrosome separation as well as maturation, chromosomal alignment, spindle assembly checkpoint, and cytokinesis. Required for normal spindle positioning during mitosis and for the localization of NUMA1 and DCTN1 to the cell cortex during metaphase. Required for initial activation of CDK1 at centrosomes. Phosphorylates numerous target proteins, including ARHGEF2, BORA, BRCA1, CDC25B, DLGP5, HDAC6, KIF2A, LATS2, NDEL1, PARD3, PPP1R2, PLK1, RASSF1, TACC3, p53/TP53 and TPX2. Phosphorylates MCRS1 which is required for MCRS1-mediated kinetochore fiber assembly and mitotic progression. Regulates KIF2A tubulin depolymerase activity. Required for normal axon formation. Plays a role in microtubule remodeling during neurite extension. Important for microtubule formation and/or stabilization. Also acts as a key regulatory component of the p53/TP53 pathway, and particularly the checkpoint-response pathways critical for oncogenic transformation of cells, by phosphorylating and destabilizing p53/TP53. Phosphorylates its own inhibitors, the protein phosphatase type 1 (PP1) isoforms, to inhibit their activity. Inhibits cilia outgrowth. Required for cilia disassembly via phosphorylation of HDAC6 and subsequent deacetylation of alpha-tubulin. Regulates protein levels of the anti-apoptosis protein BIRC5 by suppressing the expression of the SCF(FBXL7) E3 ubiquitin-protein ligase substrate adapter FBXL7 through the phosphorylation of the transcription factor FOXP1. The chain is Aurora kinase A (Aurka) from Mus musculus (Mouse).